We begin with the raw amino-acid sequence, 349 residues long: Phenylalanine--tRNA ligase alpha subunit (349 aa).

Glu-262 is a binding site for Mg(2+).

The protein belongs to the class-II aminoacyl-tRNA synthetase family. Phe-tRNA synthetase alpha subunit type 1 subfamily. As to quaternary structure, tetramer of two alpha and two beta subunits. Mg(2+) is required as a cofactor.

It is found in the cytoplasm. The enzyme catalyses tRNA(Phe) + L-phenylalanine + ATP = L-phenylalanyl-tRNA(Phe) + AMP + diphosphate + H(+). The polypeptide is Phenylalanine--tRNA ligase alpha subunit (Sorangium cellulosum (strain So ce56) (Polyangium cellulosum (strain So ce56))).